The following is a 148-amino-acid chain: UPF0260 protein YcgN (148 aa).

Belongs to the UPF0260 family.

The polypeptide is UPF0260 protein YcgN (Salmonella paratyphi A (strain AKU_12601)).